We begin with the raw amino-acid sequence, 1104 residues long: MPRRTDLKSVLVIGSGPIVIGQAAEFDYSGTQACRVLRAEGLRVILVNSNPATIMTDPEMADATYVEPITPAVVEAIIAKERPDAVLATLGGQTALNTAIALYENGVLEKYGTELIGADVEAIKLGEDRQLFKGVVERCGAESARSHLCHSMEEVLAGAADLGYPVVVRPSFTMGGLGSGFAYDEADLRRIAGQGLHHSPVTEVLLEESILGWKEYELELMRDRADNVVVVCSIENFDPMGVHTGDSITVAPAMTLTDREYQRMRDIGIAVIREVGVDTGGCNIQFAVNPEDGRIIVIEMNPRVSRSSALASKATGFPIAKIAARLAVGYTLDEIPNDITSSTPASFEPTLDYVVVKVPRFAFEKFPAADPTLTTTMKSVGEAMALGRNFTEALQKALRSTEKRGATFSWAGEPGDRADLLRRAAQPTDERIGLVMQAIRAGATPEELFESTRIDPWFLDQMFLLDEIAGEVRDSDELTPELLRHAKRHGFSDAQIGELRHLPEDVVRGVRHALGIRPVYKTVDTCAAEFAASTPYHYSSYDEEDETRPREKAAIVILGSGPNRIGQGVEFDYSCVHASFALRDAGYETVMVNCNPETVSTDYDTSDRLYFEPLTLEDVLEVVHAEMRCGPVAGVIVQLGGQTPLGLAAKLEQAGVPIIGTSPQAIDLAEERGAFGQVLERAGLVAPKHGTASSFPGAKAIAAGIGYPVLVRPSYVLGGRGMQIVYDEASLEEYMRTATEVSPERPVLVDRFLDDAIEIDVDALFDGEEMYLGGIMEHIEEAGIHSGDSACVIPPPTLGNAELARVRAATEAIARGVGVRGLLNVQFALAADVLYVLEANPRASRTVPFVSKATGVALAKAAARLMAGTSIRDLRAEGLLPGRGDGGLLPADSPVSVKEAVLPFARFRTAEGVVVDSLLGPEMRSTGEVMGIDVDFPTAFGKSQTAAYGGLPTAGTAFISVADRDKRAMIFPIKRLADLGFTLVATEGTAQVLRRNGITSTVVRKHSEGTSEDGELTIVGRIGAGEIAMVVNTPSGNQARADGYEIRAAATAVGSPIITTIQELSAAVQAIEAAIVQERNGGGVNVASLQEHTARLNAAWEGRA.

A carboxyphosphate synthetic domain region spans residues 1–402 (MPRRTDLKSV…ALQKALRSTE (402 aa)). ATP contacts are provided by Arg129, Arg169, Gly175, Gly176, Glu208, Ile210, Glu215, Gly241, Val242, His243, Gln285, and Glu299. The region spanning 133–328 (KGVVERCGAE…IAKIAARLAV (196 aa)) is the ATP-grasp 1 domain. Positions 285, 299, and 301 each coordinate Mg(2+). Residues Gln285, Glu299, and Asn301 each contribute to the Mn(2+) site. The oligomerization domain stretch occupies residues 403 to 547 (KRGATFSWAG…YSSYDEEDET (145 aa)). The interval 548–948 (RPREKAAIVI…AFGKSQTAAY (401 aa)) is carbamoyl phosphate synthetic domain. One can recognise an ATP-grasp 2 domain in the interval 676–867 (GQVLERAGLV…LAKAAARLMA (192 aa)). 10 residues coordinate ATP: Arg712, Arg751, Leu753, Glu758, Gly783, Ile784, His785, Ser786, Gln826, and Glu838. The Mg(2+) site is built by Gln826, Glu838, and Asn840. 3 residues coordinate Mn(2+): Gln826, Glu838, and Asn840. Residues 949-1099 (GGLPTAGTAF…QEHTARLNAA (151 aa)) form the MGS-like domain. Residues 949-1104 (GGLPTAGTAF…RLNAAWEGRA (156 aa)) are allosteric domain.

This sequence belongs to the CarB family. Composed of two chains; the small (or glutamine) chain promotes the hydrolysis of glutamine to ammonia, which is used by the large (or ammonia) chain to synthesize carbamoyl phosphate. Tetramer of heterodimers (alpha,beta)4. Requires Mg(2+) as cofactor. It depends on Mn(2+) as a cofactor.

It catalyses the reaction hydrogencarbonate + L-glutamine + 2 ATP + H2O = carbamoyl phosphate + L-glutamate + 2 ADP + phosphate + 2 H(+). The enzyme catalyses hydrogencarbonate + NH4(+) + 2 ATP = carbamoyl phosphate + 2 ADP + phosphate + 2 H(+). It participates in amino-acid biosynthesis; L-arginine biosynthesis; carbamoyl phosphate from bicarbonate: step 1/1. Its pathway is pyrimidine metabolism; UMP biosynthesis via de novo pathway; (S)-dihydroorotate from bicarbonate: step 1/3. Large subunit of the glutamine-dependent carbamoyl phosphate synthetase (CPSase). CPSase catalyzes the formation of carbamoyl phosphate from the ammonia moiety of glutamine, carbonate, and phosphate donated by ATP, constituting the first step of 2 biosynthetic pathways, one leading to arginine and/or urea and the other to pyrimidine nucleotides. The large subunit (synthetase) binds the substrates ammonia (free or transferred from glutamine from the small subunit), hydrogencarbonate and ATP and carries out an ATP-coupled ligase reaction, activating hydrogencarbonate by forming carboxy phosphate which reacts with ammonia to form carbamoyl phosphate. This Kineococcus radiotolerans (strain ATCC BAA-149 / DSM 14245 / SRS30216) protein is Carbamoyl phosphate synthase large chain.